We begin with the raw amino-acid sequence, 468 residues long: Adenosylhomocysteinase (468 aa).

The substrate site is built by threonine 57, aspartate 132, and glutamate 194. Residue threonine 195 to threonine 197 participates in NAD(+) binding. Substrate is bound by residues lysine 224 and aspartate 228. NAD(+)-binding positions include asparagine 229, glycine 258–glycine 263, glutamate 281, asparagine 316, isoleucine 337–histidine 339, and asparagine 382.

Belongs to the adenosylhomocysteinase family. The cofactor is NAD(+).

The protein localises to the cytoplasm. It catalyses the reaction S-adenosyl-L-homocysteine + H2O = L-homocysteine + adenosine. The protein operates within amino-acid biosynthesis; L-homocysteine biosynthesis; L-homocysteine from S-adenosyl-L-homocysteine: step 1/1. Its function is as follows. May play a key role in the regulation of the intracellular concentration of adenosylhomocysteine. The polypeptide is Adenosylhomocysteinase (Methylorubrum populi (strain ATCC BAA-705 / NCIMB 13946 / BJ001) (Methylobacterium populi)).